We begin with the raw amino-acid sequence, 305 residues long: Tyrosine recombinase XerD (305 aa).

In terms of domain architecture, Core-binding (CB) spans 1–83; sequence MEFISQFLEM…TIKSYYEFLI (83 aa). Residues 104–298 enclose the Tyr recombinase domain; it reads KLPEILSIDD…QTNHLKKALL (195 aa). Residues arginine 145, lysine 175, histidine 250, arginine 253, and histidine 276 contribute to the active site. Tyrosine 285 (O-(3'-phospho-DNA)-tyrosine intermediate) is an active-site residue.

This sequence belongs to the 'phage' integrase family. XerD subfamily. Forms a cyclic heterotetrameric complex composed of two molecules of XerC and two molecules of XerD.

Its subcellular location is the cytoplasm. In terms of biological role, site-specific tyrosine recombinase, which acts by catalyzing the cutting and rejoining of the recombining DNA molecules. The XerC-XerD complex is essential to convert dimers of the bacterial chromosome into monomers to permit their segregation at cell division. It also contributes to the segregational stability of plasmids. In Rickettsia bellii (strain RML369-C), this protein is Tyrosine recombinase XerD.